The primary structure comprises 142 residues: Thioredoxin-like protein YLS8 (142 aa).

This sequence belongs to the DIM1 family. As to expression, expressed in roots, leaves, stems, cauline leaves and flowers.

This Arabidopsis thaliana (Mouse-ear cress) protein is Thioredoxin-like protein YLS8 (YLS8).